Reading from the N-terminus, the 274-residue chain is Putative ABC transporter ATP-binding protein alr3946 (274 aa).

Residues leucine 6–glycine 242 enclose the ABC transporter domain. Glycine 40–threonine 47 lines the ATP pocket.

Belongs to the ABC transporter superfamily.

It is found in the cell inner membrane. Its function is as follows. Probably part of an ABC transporter complex. Responsible for energy coupling to the transport system. The chain is Putative ABC transporter ATP-binding protein alr3946 from Nostoc sp. (strain PCC 7120 / SAG 25.82 / UTEX 2576).